We begin with the raw amino-acid sequence, 192 residues long: Protein SHORT HYPOCOTYL IN WHITE LIGHT 1 (192 aa).

A Nuclear localization signal motif is present at residues 43–50 (FRRLNRSL). Residues 70–92 (GGDNYDVVPDDDGFSDDDDEEDE) form a disordered region. The span at 77 to 92 (VPDDDGFSDDDDEEDE) shows a compositional bias: acidic residues. Transmembrane regions (helical) follow at residues 122–142 (ILPA…ILLL) and 159–179 (GGTV…ASFF).

In terms of assembly, interacts with HY5 and COP1 in the nucleus. In terms of tissue distribution, expressed in young seedlings (e.g. hypocotyl and cotyledons) and in green tissues (e.g. leaves, stems, sepals, and young siliques).

The protein localises to the nucleus membrane. Functionally, negative regulator of photomorphogenesis modulating both light and abscisic acid (ABA) signaling pathways. Negatively regulates the light-mediated inhibition of hypocotyl elongation, probably in a PHYB-mediated signaling pathway, but promotes flowering time (especially in long days) and lateral root formation. Enhances light-regulated gene expression. Promotes COP1-mediated degradation of HY5 during seedling development (e.g. hypocotyl growth) through enhanced ubiquitination in the darkness. Also involved in root gravitropism. The sequence is that of Protein SHORT HYPOCOTYL IN WHITE LIGHT 1 from Arabidopsis thaliana (Mouse-ear cress).